Consider the following 216-residue polypeptide: Uracil-DNA glycosylase (216 aa).

Aspartate 60 functions as the Proton acceptor in the catalytic mechanism.

It belongs to the uracil-DNA glycosylase (UDG) superfamily. UNG family.

The protein resides in the cytoplasm. It carries out the reaction Hydrolyzes single-stranded DNA or mismatched double-stranded DNA and polynucleotides, releasing free uracil.. Functionally, excises uracil residues from the DNA which can arise as a result of misincorporation of dUMP residues by DNA polymerase or due to deamination of cytosine. The chain is Uracil-DNA glycosylase from Psychromonas ingrahamii (strain DSM 17664 / CCUG 51855 / 37).